Reading from the N-terminus, the 514-residue chain is 2,3-bisphosphoglycerate-independent phosphoglycerate mutase (514 aa).

Residues D14 and S64 each contribute to the Mn(2+) site. S64 acts as the Phosphoserine intermediate in catalysis. Substrate-binding positions include H125, 155–156 (RD), R187, R193, 263–266 (RADR), and K336. D403, H407, D444, H445, and H463 together coordinate Mn(2+).

Belongs to the BPG-independent phosphoglycerate mutase family. Monomer. It depends on Mn(2+) as a cofactor.

The enzyme catalyses (2R)-2-phosphoglycerate = (2R)-3-phosphoglycerate. It functions in the pathway carbohydrate degradation; glycolysis; pyruvate from D-glyceraldehyde 3-phosphate: step 3/5. Catalyzes the interconversion of 2-phosphoglycerate and 3-phosphoglycerate. The protein is 2,3-bisphosphoglycerate-independent phosphoglycerate mutase of Shewanella sp. (strain MR-7).